Here is a 161-residue protein sequence, read N- to C-terminus: Epithelial membrane protein 2 (161 aa).

A run of 4 helical transmembrane segments spans residues 1-21, 67-87, 95-115, and 137-157; these read MLVI…LLFI, TMIL…LQLF, FVFT…GASI, and FVVA…YLVL.

The protein belongs to the PMP-22/EMP/MP20 family. Expressed in the arches, orbits, pectoral fins, vessels, pronephric renal tubules, and glomeruli.

The protein resides in the golgi apparatus membrane. It localises to the cell membrane. The protein localises to the apical cell membrane. Its subcellular location is the membrane raft. It is found in the cytoplasm. The protein resides in the nucleus. It localises to the perinuclear region. Its function is as follows. Functions as a key regulator of cell membrane composition by regulating protein surface expression. Also, plays a role in regulation of processes including cell migration, cell proliferation, cell contraction and cell adhesion. May play a role in glomerular filtration. The chain is Epithelial membrane protein 2 (emp2) from Danio rerio (Zebrafish).